Here is a 154-residue protein sequence, read N- to C-terminus: Low molecular weight protein-tyrosine-phosphatase PtpA (154 aa).

The active-site Nucleophile is Cys8. Arg14 is an active-site residue. Asp120 acts as the Proton donor in catalysis.

The protein belongs to the low molecular weight phosphotyrosine protein phosphatase family. As to quaternary structure, interacts with host CORO1A. In terms of processing, phosphorylations at Tyr-122 and Tyr-123 are essential for phosphatase activity.

Its subcellular location is the secreted. It carries out the reaction O-phospho-L-tyrosyl-[protein] + H2O = L-tyrosyl-[protein] + phosphate. Functionally, secreted tyrosine phosphatase that plays a critical role during infection as a bacterial effector protein that counteracts host defenses. Required for intramacrophage survival. The chain is Low molecular weight protein-tyrosine-phosphatase PtpA (ptpA) from Staphylococcus aureus (strain bovine RF122 / ET3-1).